Reading from the N-terminus, the 385-residue chain is S-adenosylmethionine synthase (385 aa).

Histidine 15 is a binding site for ATP. A Mg(2+)-binding site is contributed by aspartate 17. Glutamate 43 serves as a coordination point for K(+). L-methionine contacts are provided by glutamate 56 and glutamine 99. Residues 99 to 109 form a flexible loop region; it reads QSPDINKGINN. Residues 164 to 166, 230 to 231, aspartate 239, 245 to 246, alanine 262, and lysine 266 each bind ATP; these read DAK, RF, and RK. Aspartate 239 is a binding site for L-methionine. Lysine 270 serves as a coordination point for L-methionine.

Belongs to the AdoMet synthase family. As to quaternary structure, homotetramer; dimer of dimers. Requires Mg(2+) as cofactor. The cofactor is K(+).

It is found in the cytoplasm. The catalysed reaction is L-methionine + ATP + H2O = S-adenosyl-L-methionine + phosphate + diphosphate. The protein operates within amino-acid biosynthesis; S-adenosyl-L-methionine biosynthesis; S-adenosyl-L-methionine from L-methionine: step 1/1. Its function is as follows. Catalyzes the formation of S-adenosylmethionine (AdoMet) from methionine and ATP. The overall synthetic reaction is composed of two sequential steps, AdoMet formation and the subsequent tripolyphosphate hydrolysis which occurs prior to release of AdoMet from the enzyme. In Baumannia cicadellinicola subsp. Homalodisca coagulata, this protein is S-adenosylmethionine synthase.